A 208-amino-acid chain; its full sequence is Uracil phosphoribosyltransferase (208 aa).

Residues Arg-78, Arg-103, and 130 to 138 (DPMLATGGT) each bind 5-phospho-alpha-D-ribose 1-diphosphate. Uracil contacts are provided by residues Ile-193 and 198 to 200 (GDA). Asp-199 provides a ligand contact to 5-phospho-alpha-D-ribose 1-diphosphate.

Belongs to the UPRTase family. Requires Mg(2+) as cofactor.

The enzyme catalyses UMP + diphosphate = 5-phospho-alpha-D-ribose 1-diphosphate + uracil. It functions in the pathway pyrimidine metabolism; UMP biosynthesis via salvage pathway; UMP from uracil: step 1/1. Allosterically activated by GTP. Its function is as follows. Catalyzes the conversion of uracil and 5-phospho-alpha-D-ribose 1-diphosphate (PRPP) to UMP and diphosphate. The protein is Uracil phosphoribosyltransferase of Desulfotalea psychrophila (strain LSv54 / DSM 12343).